The primary structure comprises 169 residues: Peptide deformylase (169 aa).

Fe cation-binding residues include Cys-91 and His-133. Glu-134 is a catalytic residue. His-137 provides a ligand contact to Fe cation.

This sequence belongs to the polypeptide deformylase family. It depends on Fe(2+) as a cofactor.

It carries out the reaction N-terminal N-formyl-L-methionyl-[peptide] + H2O = N-terminal L-methionyl-[peptide] + formate. Removes the formyl group from the N-terminal Met of newly synthesized proteins. Requires at least a dipeptide for an efficient rate of reaction. N-terminal L-methionine is a prerequisite for activity but the enzyme has broad specificity at other positions. The protein is Peptide deformylase of Enterobacter sp. (strain 638).